The chain runs to 277 residues: MLAVSSRRVLPGFTLSLGTSLLFVCLILLLPLSALVMQLSQMSWAQYWDVVTNPQVVAAYKVTLLAAFVASIFNGVFGLLMAWILTRYRFPGRTLLDALMDLPFALPTAVAGLTLASLFSVNGFYGQFLAQFDIKVTYTWLGIAVAMAFTSIPFVVRTVQPVLEELGPEYEEAAQTLGATRLQSFRKVVLPELSPALIAGVALSFTRSLGEFGAVIFIAGNIAWKTEVTSLMIFVRLQEFDYPAASAIASVILAASLLLLFSINTLQSRFGRRVVGH.

Helical transmembrane passes span 17 to 37 (LGTS…ALVM), 64 to 84 (LLAA…MAWI), 99 to 119 (LMDL…ASLF), 136 to 156 (VTYT…PFVV), 188 to 205 (VVLP…ALSF), 215 to 235 (VIFI…MIFV), and 243 to 263 (PAAS…LFSI). In terms of domain architecture, ABC transmembrane type-1 spans 60-263 (YKVTLLAAFV…AASLLLLFSI (204 aa)).

The protein belongs to the binding-protein-dependent transport system permease family. CysTW subfamily. As to quaternary structure, the complex is composed of two ATP-binding proteins (CysA), two transmembrane proteins (CysT and CysW) and a solute-binding protein (CysP).

It localises to the cell inner membrane. In terms of biological role, part of the ABC transporter complex CysAWTP (TC 3.A.1.6.1) involved in sulfate/thiosulfate import. Probably responsible for the translocation of the substrate across the membrane. This Salmonella typhimurium (strain LT2 / SGSC1412 / ATCC 700720) protein is Sulfate transport system permease protein CysT (cysU).